Reading from the N-terminus, the 353-residue chain is MVQRQQTALVGTHDGGIRLSSTETIPDIAGDSVLIKTKAVSVNPVDTKMIGPYVTPGAVAGFDFAGVVEMVGPDATKCDIRVGDRVCTAIMGMNPLDPTVGAFAEYTAAVEWILLKIPPSLSFQEGASLGISFMTTGLALFKSLGLPGNPLSPATEKLPVLVYGGSSATGTAAIQLVRLAGFAPITTCSPRNFELVKSYGASAVFDYNDPNCISDIKKHTKNNIRYALDCISTTQSMQFCYQAIGRAGGKYTALEPYSEAVARTRKMVKPDWIMGPQMLGKEIRWPEPHWRPANAEMGEFGVYWTAVLNKLLENDLIRPHAIVVREGGLEKVLDGIEDIRAKKISGKKLVFTL.

V45 to K48 contributes to the NADP(+) binding site. I131–L138 serves as a coordination point for substrate. Residues S166–T169, S189–N192, Y207, and L254–E255 each bind NADP(+). G275–L279 serves as a coordination point for substrate. Residue I344–S345 participates in NADP(+) binding.

This sequence belongs to the zinc-containing alcohol dehydrogenase family. Monomer.

The enzyme catalyses L-serine + 7 malonyl-CoA + acetyl-CoA + 2 S-adenosyl-L-methionine + ATP + 8 NADPH + 11 H(+) = (5S)-3-[(2E,6R,8E,10E,12E)-2,6-dimethyltetradeca-2,8,10,12-tetraenoyl]-5-(hydroxymethyl)pyrrolidine-2,4-dione + AMP + 2 S-adenosyl-L-homocysteine + 7 CO2 + diphosphate + 8 NADP(+) + 8 CoA + 6 H2O. The protein operates within mycotoxin biosynthesis. Its function is as follows. Trans-enoyl reductase; part of the gene cluster that mediates the biosynthesis of equisetin, a trans-fused decalin-containing tetramic acid with antimicrobial activity. The PKS module of eqxS together with the enoylreductase eqxC catalyze the formation of the polyketide unit which is then conjugated to L-serine by the condensation domain of the eqxS NRPS module. Activity of the Dieckmann cyclase domain (RED) results in release of the Dieckmann product intermediate. Diels-Alderase eqx3 is involved in endo-selective Diels-Alder cycloaddition to form the decalin ring, leading to the production of N-desmethylequisetin also called trichosetin. Subsequent N-methylation is carried out by eqxD to give equisetin. In Fusarium heterosporum, this protein is Trans-enoyl reductase eqxC.